The chain runs to 281 residues: sn-glycerol-3-phosphate transport system permease protein UgpE (281 aa).

The next 6 membrane-spanning stretches (helical) occupy residues 14-34 (IMLI…FVAA), 85-105 (FAIT…IVYF), 113-133 (FFWL…FPTI), 142-162 (LDSY…TFLF), 201-221 (AALF…PILI), and 247-267 (WNQV…VVLL). Residues 77–268 (LLNSFVMAFA…IPPVVVVLLM (192 aa)) enclose the ABC transmembrane type-1 domain.

This sequence belongs to the binding-protein-dependent transport system permease family. UgpAE subfamily. The complex is composed of two ATP-binding proteins (UgpC), two transmembrane proteins (UgpA and UgpE) and a solute-binding protein (UgpB).

The protein localises to the cell inner membrane. Part of the ABC transporter complex UgpBAEC involved in sn-glycerol-3-phosphate (G3P) import. Probably responsible for the translocation of the substrate across the membrane. In Yersinia pestis bv. Antiqua (strain Antiqua), this protein is sn-glycerol-3-phosphate transport system permease protein UgpE (ugpE).